Consider the following 218-residue polypeptide: Glutathione S-transferase Mu 7 (218 aa).

Positions 2–88 constitute a GST N-terminal domain; that stretch reads PMTLGYWDIR…YLGRKHNLCG (87 aa). Glutathione is bound by residues 7 to 8, 46 to 50, 59 to 60, and 72 to 73; these read YW, WLNEK, NL, and QS. Positions 90 to 208 constitute a GST C-terminal domain; that stretch reads TEEERIRVDI…KSSRFLPRPL (119 aa). Y116 is a substrate binding site.

The protein belongs to the GST superfamily. Mu family. Homodimer.

It localises to the cytoplasm. The catalysed reaction is RX + glutathione = an S-substituted glutathione + a halide anion + H(+). Conjugation of reduced glutathione to a wide number of exogenous and endogenous hydrophobic electrophiles. This Rattus norvegicus (Rat) protein is Glutathione S-transferase Mu 7.